Reading from the N-terminus, the 132-residue chain is Nitrogenase iron-iron protein delta chain (132 aa).

In terms of assembly, hexamer of two alpha, two beta, and two delta chains. Requires iron-sulfur cluster as cofactor.

The enzyme catalyses N2 + 8 reduced [2Fe-2S]-[ferredoxin] + 16 ATP + 16 H2O = H2 + 8 oxidized [2Fe-2S]-[ferredoxin] + 2 NH4(+) + 16 ADP + 16 phosphate + 6 H(+). Its function is as follows. The key enzymatic reactions in nitrogen fixation are catalyzed by the nitrogenase complex, which has 2 components: the iron protein (component 2) and a component 1 which is either a molybdenum-iron protein, a vanadium-iron, or an iron-iron protein. This Azotobacter vinelandii protein is Nitrogenase iron-iron protein delta chain (anfG).